Consider the following 469-residue polypeptide: Bifunctional protein GlmU (469 aa).

Residues 1-236 (MLNIKLNIVI…ISEINGINDC (236 aa)) are pyrophosphorylase. UDP-N-acetyl-alpha-D-glucosamine is bound by residues 11–14 (LAAG), Lys25, Gln83, 88–89 (GT), 110–112 (YGD), Gly147, Glu161, Asn176, and Asn234. Asp112 is a binding site for Mg(2+). Asn234 provides a ligand contact to Mg(2+). The tract at residues 237 to 257 (AQLANLERLYQKEQAESLLRI) is linker. Positions 258 to 469 (GVIIADPNRF…KKKIRYNIIY (212 aa)) are N-acetyltransferase. UDP-N-acetyl-alpha-D-glucosamine-binding residues include Arg340 and Lys358. His370 (proton acceptor) is an active-site residue. The UDP-N-acetyl-alpha-D-glucosamine site is built by Tyr373 and Asn384. Residues Ala387, 393–394 (NY), Ser412, Ala430, and Arg447 each bind acetyl-CoA.

The protein in the N-terminal section; belongs to the N-acetylglucosamine-1-phosphate uridyltransferase family. This sequence in the C-terminal section; belongs to the transferase hexapeptide repeat family. Homotrimer. It depends on Mg(2+) as a cofactor.

The protein localises to the cytoplasm. It carries out the reaction alpha-D-glucosamine 1-phosphate + acetyl-CoA = N-acetyl-alpha-D-glucosamine 1-phosphate + CoA + H(+). The catalysed reaction is N-acetyl-alpha-D-glucosamine 1-phosphate + UTP + H(+) = UDP-N-acetyl-alpha-D-glucosamine + diphosphate. Its pathway is nucleotide-sugar biosynthesis; UDP-N-acetyl-alpha-D-glucosamine biosynthesis; N-acetyl-alpha-D-glucosamine 1-phosphate from alpha-D-glucosamine 6-phosphate (route II): step 2/2. It functions in the pathway nucleotide-sugar biosynthesis; UDP-N-acetyl-alpha-D-glucosamine biosynthesis; UDP-N-acetyl-alpha-D-glucosamine from N-acetyl-alpha-D-glucosamine 1-phosphate: step 1/1. The protein operates within bacterial outer membrane biogenesis; LPS lipid A biosynthesis. Catalyzes the last two sequential reactions in the de novo biosynthetic pathway for UDP-N-acetylglucosamine (UDP-GlcNAc). The C-terminal domain catalyzes the transfer of acetyl group from acetyl coenzyme A to glucosamine-1-phosphate (GlcN-1-P) to produce N-acetylglucosamine-1-phosphate (GlcNAc-1-P), which is converted into UDP-GlcNAc by the transfer of uridine 5-monophosphate (from uridine 5-triphosphate), a reaction catalyzed by the N-terminal domain. The sequence is that of Bifunctional protein GlmU from Baumannia cicadellinicola subsp. Homalodisca coagulata.